Reading from the N-terminus, the 239-residue chain is Sugar fermentation stimulation protein homolog (239 aa).

It belongs to the SfsA family.

The chain is Sugar fermentation stimulation protein homolog from Cyanothece sp. (strain PCC 7425 / ATCC 29141).